Consider the following 718-residue polypeptide: Probable glycerol-3-phosphate acyltransferase, mitochondrial (718 aa).

An HXXXXD motif motif is present at residues 167-172 (HRSHLD). A helical membrane pass occupies residues 409-425 (MMCSISPVAVVSCLLLA).

It belongs to the GPAT/DAPAT family.

The protein localises to the mitochondrion membrane. It carries out the reaction sn-glycerol 3-phosphate + an acyl-CoA = a 1-acyl-sn-glycero-3-phosphate + CoA. The protein operates within phospholipid metabolism; CDP-diacylglycerol biosynthesis; CDP-diacylglycerol from sn-glycerol 3-phosphate: step 1/3. This is Probable glycerol-3-phosphate acyltransferase, mitochondrial (acl-6) from Caenorhabditis elegans.